A 902-amino-acid chain; its full sequence is Gamma-tubulin complex component 2 (902 aa).

Position 83 is a phosphotyrosine (Tyr83). The disordered stretch occupies residues 875–902 (ERSQKAAPQVPVLRGPPAPAPRVAVTAQ).

It belongs to the TUBGCP family. In terms of assembly, component of the gamma-tubulin ring complex (gTuRC) consisting of TUBGCP2, TUBGCP3, TUBGCP4, TUBGCP5 and TUBGCP6 and gamma-tubulin TUBG1 or TUBG2. TUBGCP2, TUBGCP3, TUBGCP4, TUBGCP5 and TUBGCP6 assemble in a 5:5:2:1:1 stoichiometry; each is associated with a gamma-tubulin, thereby arranging 14 gamma-tubulins in a helical manner. Gamma-tubulin at the first position is blocked by TUBGCP3 at the last position, allowing 13 protafilaments to grow into a microtubule. The gTuRC (via TUBGCP3 and TUBGCP6) interacts with ACTB and MZT1; the interactions form a luminal bridge that stabilizes the initial structure during complex assembly. The gTuRC (via TUBGCP2) interacts with MZT2A/MZT2B and CDK5RAP2 (via CM1 motif); the interactions play a role in gTuRC activation. Interacts with ATF5; the ATF5:PCNT:polyglutamylated tubulin (PGT) tripartite unites the mother centriole and the pericentriolar material (PCM) in the centrosome.

Its subcellular location is the cytoplasm. The protein localises to the cytoskeleton. It is found in the microtubule organizing center. It localises to the centrosome. Component of the gamma-tubulin ring complex (gTuRC) which mediates microtubule nucleation. The gTuRC regulates the minus-end nucleation of alpha-beta tubulin heterodimers that grow into microtubule protafilaments, a critical step in centrosome duplication and spindle formation. Plays a role in neuronal migration. This chain is Gamma-tubulin complex component 2 (TUBGCP2), found in Pongo abelii (Sumatran orangutan).